We begin with the raw amino-acid sequence, 517 residues long: Arp2/3 complex-activating protein rickA (517 aa).

2 disordered regions span residues 313–441 (LENN…SKPA) and 461–517 (KVSD…SFVR). Pro residues-rich tracts occupy residues 319 to 340 (PPSP…PSPL) and 347 to 378 (SSPP…PPMA). Positions 406–423 (DTSDLMREIAGPKKLKKV) constitute a WH2 domain. The central and acidic domains stretch occupies residues 444 to 477 (VNALSGLESIFARRAVIKVSDSSSSESDSGNWSD). Over residues 463 to 479 (SDSSSSESDSGNWSDVS) the composition is skewed to low complexity. Over residues 500 to 517 (THAQKINNRNSQNPSFVR) the composition is skewed to polar residues.

Homodimer.

Its subcellular location is the cell surface. Its function is as follows. Recruits and activates the Arp2/3 complex, which in turn leads to actin polymerization, promoting Rickettsia motility during infection. This chain is Arp2/3 complex-activating protein rickA (rickA), found in Rickettsia conorii (strain ATCC VR-613 / Malish 7).